The primary structure comprises 901 residues: Protein translocase subunit SecA (901 aa).

Residues Gln87, 105 to 109 (GEGKT), and Asp512 contribute to the ATP site. The disordered stretch occupies residues 858 to 891 (SHQDDDTAAAAALAAQTGDRKVGRNDPCPCGSGK). Positions 885, 887, 896, and 897 each coordinate Zn(2+).

This sequence belongs to the SecA family. Monomer and homodimer. Part of the essential Sec protein translocation apparatus which comprises SecA, SecYEG and auxiliary proteins SecDF-YajC and YidC. Zn(2+) is required as a cofactor.

The protein localises to the cell inner membrane. It is found in the cytoplasm. It carries out the reaction ATP + H2O + cellular proteinSide 1 = ADP + phosphate + cellular proteinSide 2.. Functionally, part of the Sec protein translocase complex. Interacts with the SecYEG preprotein conducting channel. Has a central role in coupling the hydrolysis of ATP to the transfer of proteins into and across the cell membrane, serving both as a receptor for the preprotein-SecB complex and as an ATP-driven molecular motor driving the stepwise translocation of polypeptide chains across the membrane. The sequence is that of Protein translocase subunit SecA from Escherichia fergusonii (strain ATCC 35469 / DSM 13698 / CCUG 18766 / IAM 14443 / JCM 21226 / LMG 7866 / NBRC 102419 / NCTC 12128 / CDC 0568-73).